The primary structure comprises 105 residues: Putative RNA-binding protein RbpF (105 aa).

Residues 2–79 enclose the RRM domain; the sequence is SIYVGNLSYE…RDLKVNKAKP (78 aa). Basic and acidic residues predominate over residues 75–84; it reads NKAKPKEDRG. The disordered stretch occupies residues 75 to 105; the sequence is NKAKPKEDRGSFGGGNRGGYGGGGGGGRSRY. The span at 85–105 shows a compositional bias: gly residues; sequence SFGGGNRGGYGGGGGGGRSRY.

This chain is Putative RNA-binding protein RbpF (rbpF), found in Nostoc sp. (strain PCC 7120 / SAG 25.82 / UTEX 2576).